The chain runs to 626 residues: tRNA uridine 5-carboxymethylaminomethyl modification enzyme MnmG (626 aa).

FAD is bound at residue 13–18; sequence GGGHAG. Position 273 to 287 (273 to 287) interacts with NAD(+); it reads GPRYCPSIEDKIHRF.

It belongs to the MnmG family. As to quaternary structure, homodimer. Heterotetramer of two MnmE and two MnmG subunits. It depends on FAD as a cofactor.

The protein localises to the cytoplasm. NAD-binding protein involved in the addition of a carboxymethylaminomethyl (cmnm) group at the wobble position (U34) of certain tRNAs, forming tRNA-cmnm(5)s(2)U34. The protein is tRNA uridine 5-carboxymethylaminomethyl modification enzyme MnmG of Acinetobacter baylyi (strain ATCC 33305 / BD413 / ADP1).